We begin with the raw amino-acid sequence, 975 residues long: MKLEHPDRLMNRTPLSLAALETHDAFAERHIGPDAASQQAMLDTLGFATRAALIDAVIPASIRRAETLPLGPFAQPKSEAEALAALRALADKNQVFRSYIGQGYYDTHTPAVILRNVLENPAWYTAYTPYQPEISQGRLEALLNFQQMVADLTGLEISNASLLDEATAAAEAMTLLQRVGKPQSNVFYVADDVLPQTLEVIKTRAKPIGIEVKSGPAADAAAANAFGVLLQYPGANGDVRDYRALADAIHAAGGHVVVAADILALTVLMPPGEWGADVAVGNTQRFGVPMGFGGPHAAYMAVRDEFKRQMPGRLVGVTVDAQGKPALRLALQTREQHIRREKATSNVCTAQALLAIMASMYAVYHGPRGLKTIALRVNRIAALLAAGIRHLGYATVNDTFFDTLTIDTGARTAQLHAFAQAKRINLRRAGDTRVGVSVDETTTRADLADLLTIFAQAAGATAPDIDALDAGLLPAPALPPSLERTSAYLTHHVFNRHHSETEMLRYLRSLSDKDLALDRSMIPLGSCTMKLNATSEMLPVTWPEFGRIHPFAPAEQTVGYREMIDQLEQMLVAATGYAAVSLQPNAGSQGEYAGLLIIHAYHESRGESHRDVCLIPASAHGTNPASAHMAGMKVVVVACDAQGNVDIADLKAKADAHSHDLAAIMITYPSTHGVFEQNVREICEIVHAHGGQVYVDGANMNAMVGLTAPGQFGGDVSHLNLHKTFCIPHGGGGPGVGPVAVGPHLAKFLPNQRSTGYARGEDGIGAVSAAPYGSASILPISWMYIAMMGAKNLTAATETAILNANYIAKRLAPHYPVLYSGPGGLVAHECILDLRPIKDSSGITVDDVAKRLMDYGFHAPTMSFPVPGTLMVEPTESESQEELDRFIAAMIAIRDEIRAVEEGRADREDNPLRHAPHTAAVVTANEWPHAYSREQAAFPVASLVANKYWPPVGRADNAYGDRNLFCSCVPVSDYA.

Lys723 carries the post-translational modification N6-(pyridoxal phosphate)lysine.

The protein belongs to the GcvP family. As to quaternary structure, the glycine cleavage system is composed of four proteins: P, T, L and H. Pyridoxal 5'-phosphate serves as cofactor.

The catalysed reaction is N(6)-[(R)-lipoyl]-L-lysyl-[glycine-cleavage complex H protein] + glycine + H(+) = N(6)-[(R)-S(8)-aminomethyldihydrolipoyl]-L-lysyl-[glycine-cleavage complex H protein] + CO2. Functionally, the glycine cleavage system catalyzes the degradation of glycine. The P protein binds the alpha-amino group of glycine through its pyridoxal phosphate cofactor; CO(2) is released and the remaining methylamine moiety is then transferred to the lipoamide cofactor of the H protein. In Burkholderia mallei (strain NCTC 10247), this protein is Glycine dehydrogenase (decarboxylating).